The following is a 192-amino-acid chain: Fe/S biogenesis protein NfuA (192 aa).

C149 and C152 together coordinate [4Fe-4S] cluster.

This sequence belongs to the NfuA family. As to quaternary structure, homodimer. It depends on [4Fe-4S] cluster as a cofactor.

Involved in iron-sulfur cluster biogenesis. Binds a 4Fe-4S cluster, can transfer this cluster to apoproteins, and thereby intervenes in the maturation of Fe/S proteins. Could also act as a scaffold/chaperone for damaged Fe/S proteins. In Shewanella sp. (strain MR-7), this protein is Fe/S biogenesis protein NfuA.